The chain runs to 260 residues: Thiazole synthase (260 aa).

The Schiff-base intermediate with DXP role is filled by K102. 1-deoxy-D-xylulose 5-phosphate is bound by residues G163, 189-190 (AG), and 211-212 (NT).

It belongs to the ThiG family. As to quaternary structure, homotetramer. Forms heterodimers with either ThiH or ThiS.

Its subcellular location is the cytoplasm. The catalysed reaction is [ThiS sulfur-carrier protein]-C-terminal-Gly-aminoethanethioate + 2-iminoacetate + 1-deoxy-D-xylulose 5-phosphate = [ThiS sulfur-carrier protein]-C-terminal Gly-Gly + 2-[(2R,5Z)-2-carboxy-4-methylthiazol-5(2H)-ylidene]ethyl phosphate + 2 H2O + H(+). The protein operates within cofactor biosynthesis; thiamine diphosphate biosynthesis. In terms of biological role, catalyzes the rearrangement of 1-deoxy-D-xylulose 5-phosphate (DXP) to produce the thiazole phosphate moiety of thiamine. Sulfur is provided by the thiocarboxylate moiety of the carrier protein ThiS. In vitro, sulfur can be provided by H(2)S. The protein is Thiazole synthase of Citrifermentans bemidjiense (strain ATCC BAA-1014 / DSM 16622 / JCM 12645 / Bem) (Geobacter bemidjiensis).